Consider the following 675-residue polypeptide: Heat shock 70 kDa protein, mitochondrial (675 aa).

The N-terminal 52 residues, 1–52, are a transit peptide targeting the mitochondrion; the sequence is MAATLLRSLQRRNLSSSSVSAFRSLTGSTKTSYATHKLASLTRPFSSRPAGN. The interval 639-675 is disordered; that stretch reads VSKIGQHMSGGSSGGPSEGGSQGGEQAPEAEYEEVKK. Residues 649-661 are compositionally biased toward gly residues; that stretch reads GSSGGPSEGGSQG. The segment covering 666-675 has biased composition (acidic residues); sequence PEAEYEEVKK.

The protein belongs to the heat shock protein 70 family.

The protein localises to the mitochondrion. This Pisum sativum (Garden pea) protein is Heat shock 70 kDa protein, mitochondrial (HSP1).